The chain runs to 398 residues: Neuroplastin (398 aa).

A signal peptide spans 1 to 28 (MSGSSLPSALALSLLLVSGSLLPGPGAA). 3 consecutive Ig-like domains span residues 29–134 (QNAG…PSIT), 148–235 (PRIV…IEVK), and 238–329 (PDIT…SVVT). At 29-339 (QNAGFVKSPM…VLRVRSHLAP (311 aa)) the chain is on the extracellular side. Cys52 and Cys116 are oxidised to a cystine. A narpin; mediates binding with FGFR1 and has antidepressant-like activity region spans residues 149–161 (RIVTSEEVIIRDS). The cysteines at positions 170 and 218 are disulfide-linked. Residues Asn171, Asn197, Asn229, Asn284, Asn296, and Asn317 are each glycosylated (N-linked (GlcNAc...) asparagine). A disulfide bridge connects residues Cys259 and Cys316. The chain crosses the membrane as a helical span at residues 340–360 (LWPFLGILAEIIILVVIIVVY). Residues 361–398 (EKRKRPDEVPDDDEPAGPMKTNSTNNHKDKNLRQRNTN) are Cytoplasmic-facing. The interval 365–398 (RPDEVPDDDEPAGPMKTNSTNNHKDKNLRQRNTN) is disordered.

As to quaternary structure, interacts with ATP2B1; this interaction stabilizes ATP2B1 and increases ATPase activity; this interaction controls T cell calcium homeostasis following T cell activation. Interacts with XKR8; promoting its localization at the cell membrane. In terms of tissue distribution, isoform 1 is ubiquitously expressed. Isoform 2 is expressed in brain cortex and cerebellum (at protein level).

The protein localises to the cell membrane. The protein resides in the postsynaptic density. Probable homophilic and heterophilic cell adhesion molecule involved in long term potentiation at hippocampal excitatory synapses through activation of p38MAPK. May also regulate neurite outgrowth by activating the FGFR1 signaling pathway. May play a role in synaptic plasticity. Also acts as a chaperone for ATP2B1; stabilizes ATP2B1 and increases its ATPase activity. Promotes localization of XKR8 at the cell membrane. The chain is Neuroplastin (NPTN) from Homo sapiens (Human).